The chain runs to 94 residues: Large ribosomal subunit protein uL23c (94 aa).

It belongs to the universal ribosomal protein uL23 family. Part of the 50S ribosomal subunit.

Its subcellular location is the plastid. The protein resides in the chloroplast. Functionally, binds to 23S rRNA. The chain is Large ribosomal subunit protein uL23c (rpl23) from Tupiella akineta (Green alga).